A 199-amino-acid polypeptide reads, in one-letter code: Phosphoheptose isomerase (199 aa).

Residues 36 to 198 (MAQCLLNEHK…DRKLIPSSED (163 aa)) enclose the SIS domain. Residue 51–53 (NGG) participates in substrate binding. The Zn(2+) site is built by histidine 60 and glutamate 64. Substrate is bound by residues glutamate 64, 93-94 (ND), 119-121 (STS), serine 124, and glutamine 174. 2 residues coordinate Zn(2+): glutamine 174 and histidine 182.

The protein belongs to the SIS family. GmhA subfamily. Homotetramer. Requires Zn(2+) as cofactor.

Its subcellular location is the cytoplasm. It catalyses the reaction 2 D-sedoheptulose 7-phosphate = D-glycero-alpha-D-manno-heptose 7-phosphate + D-glycero-beta-D-manno-heptose 7-phosphate. Its pathway is carbohydrate biosynthesis; D-glycero-D-manno-heptose 7-phosphate biosynthesis; D-glycero-alpha-D-manno-heptose 7-phosphate and D-glycero-beta-D-manno-heptose 7-phosphate from sedoheptulose 7-phosphate: step 1/1. Functionally, catalyzes the isomerization of sedoheptulose 7-phosphate in D-glycero-D-manno-heptose 7-phosphate. This chain is Phosphoheptose isomerase, found in Coxiella burnetii (strain CbuK_Q154) (Coxiella burnetii (strain Q154)).